The following is a 152-amino-acid chain: Phospholipase A2 (152 aa).

Positions M1–A20 are cleaved as a signal peptide. 8 disulfides stabilise this stretch: C39/C96, C53/C142, C55/C70, C69/C124, C75/C149, C76/C117, C85/C110, and C103/C115. Ca(2+) is bound by residues G56 and G58. Residue H73 is part of the active site. D74 contributes to the Ca(2+) binding site. D118 is an active-site residue.

Belongs to the phospholipase A2 family. In terms of tissue distribution, expressed by the venom gland. Heavily expressed in the venom gland transcriptome.

It localises to the secreted. It catalyses the reaction a 1,2-diacyl-sn-glycero-3-phosphocholine + H2O = a 1-acyl-sn-glycero-3-phosphocholine + a fatty acid + H(+). Functionally, PA2 catalyzes the calcium-dependent hydrolysis of the 2-acyl groups in 3-sn-phosphoglycerides. In Meiacanthus atrodorsalis (Forktail blenny), this protein is Phospholipase A2.